Here is a 675-residue protein sequence, read N- to C-terminus: MSDNRALRRAHVLANHILQSNPPSSNPSLSRELCLQYSPPELNESYGFDVKEMRKLLDGHNVVDRDWIYGLMMQSNLFNRKERGGKIFVSPDYNQTMEQQREITMKRIWYLLENGVFKGWLTETGPEAELRKLALLEVCGIYDHSVSIKVGVHFFLWGNAVKFFGTKRHHEKWLKNTEDYVVKGCFAMTELGHGSNVRGIETVTTYDPKTEEFVINTPCESAQKYWIGGAANHATHTIVFSQLHINGTNQGVHAFIAQIRDQDGSICPNIRIADCGHKIGLNGVDNGRIWFDNLRIPRENLLNAVADVSSDGKYVSSIKDPDQRFGAFMAPLTSGRVTIASSAIYSAKVGLSIAIRYSLSRRAFSVTANGPEVLLLDYPSHQRRLLPLLAKTYAMSFAANELKMIYVKRTPETNKAIHVVSSGFKAVLTWHNMHTLQECREAVGGQGVKTENLVGQLKGEFDVQTTFEGDNNVLMQQVSKALFAEYVSCKKRNKPFKGLGLEHMNSPRPVLPTQLTSSTLRCSQFQTNVFCLRERDLLEQFTSEVAQLQGRGESREFSFLLSHQLAEDLGKAFTEKAILQTILDAEAKLPTGSVKDVLGLVRSMYALISLEEDPSLLRYGYLSQDNVGDVRREVSKLCGELRPHALALVTSFGIPDSFLSPIAFNWVEANAWSSV.

Residues 1-34 constitute a peroxisome transit peptide; the sequence is MSDNRALRRAHVLANHILQSNPPSSNPSLSRELC. 442–457 is a binding site for FAD; sequence AVGGQGVKTENLVGQL.

It belongs to the acyl-CoA oxidase family. The cofactor is FAD. In terms of tissue distribution, most abundant in flowers and senescing rosette leaves. Lower expression in hypocotyls, stems, young rosette leaves, cotyledons, cauline leaves and root tip of young seedlings.

The protein localises to the peroxisome. It catalyses the reaction a 2,3-saturated acyl-CoA + O2 = a (2E)-enoyl-CoA + H2O2. It functions in the pathway lipid metabolism; peroxisomal fatty acid beta-oxidation. Functionally, catalyzes the desaturation of medium-chain acyl-CoAs to 2-trans-enoyl-CoAs. Active on C8:0- to C14:0-CoA with a maximal activity on C12:0-CoA. This chain is Acyl-coenzyme A oxidase 3, peroxisomal (ACX3), found in Arabidopsis thaliana (Mouse-ear cress).